The following is a 509-amino-acid chain: ATP synthase subunit alpha (509 aa).

169–176 contributes to the ATP binding site; that stretch reads GDRKTGKT.

Belongs to the ATPase alpha/beta chains family. F-type ATPases have 2 components, CF(1) - the catalytic core - and CF(0) - the membrane proton channel. CF(1) has five subunits: alpha(3), beta(3), gamma(1), delta(1), epsilon(1). CF(0) has three main subunits: a(1), b(2) and c(9-12). The alpha and beta chains form an alternating ring which encloses part of the gamma chain. CF(1) is attached to CF(0) by a central stalk formed by the gamma and epsilon chains, while a peripheral stalk is formed by the delta and b chains.

It localises to the cell membrane. The enzyme catalyses ATP + H2O + 4 H(+)(in) = ADP + phosphate + 5 H(+)(out). In terms of biological role, produces ATP from ADP in the presence of a proton gradient across the membrane. The alpha chain is a regulatory subunit. The sequence is that of ATP synthase subunit alpha from Limosilactobacillus reuteri (strain DSM 20016) (Lactobacillus reuteri).